The primary structure comprises 238 residues: N-terminal acetyltransferase A complex catalytic subunit ARD1 (238 aa).

Residues 35-195 (YHILSWPEAS…DAYAMKKVLK (161 aa)) form the N-acetyltransferase domain.

Belongs to the acetyltransferase family. ARD1 subfamily. Component of the N-terminal acetyltransferase A (NatA) complex, which is composed of ARD1, NAT1 and NAT5. Can self-associate.

The protein resides in the cytoplasm. It catalyses the reaction N-terminal glycyl-[protein] + acetyl-CoA = N-terminal N(alpha)-acetylglycyl-[protein] + CoA + H(+). The enzyme catalyses N-terminal L-alanyl-[protein] + acetyl-CoA = N-terminal N(alpha)-acetyl-L-alanyl-[protein] + CoA + H(+). The catalysed reaction is N-terminal L-seryl-[protein] + acetyl-CoA = N-terminal N(alpha)-acetyl-L-seryl-[protein] + CoA + H(+). It carries out the reaction N-terminal L-valyl-[protein] + acetyl-CoA = N-terminal N(alpha)-acetyl-L-valyl-[protein] + CoA + H(+). It catalyses the reaction N-terminal L-cysteinyl-[protein] + acetyl-CoA = N-terminal N(alpha)-acetyl-L-cysteinyl-[protein] + CoA + H(+). The enzyme catalyses N-terminal L-threonyl-[protein] + acetyl-CoA = N-terminal N(alpha)-acetyl-L-threonyl-[protein] + CoA + H(+). In terms of biological role, catalytic component of the NatA N-terminal acetyltransferase, which catalyzes acetylation of proteins beginning with Met-Ser, Met-Gly and Met-Ala. N-acetylation plays a role in normal eukaryotic translation and processing, protect against proteolytic degradation and protein turnover. This Saccharomyces cerevisiae (strain ATCC 204508 / S288c) (Baker's yeast) protein is N-terminal acetyltransferase A complex catalytic subunit ARD1 (ARD1).